Here is a 453-residue protein sequence, read N- to C-terminus: Cobyrinate a,c-diamide synthase (453 aa).

A GATase cobBQ-type domain is found at 250 to 440 (RIAVPFDEAF…IHTHTACLPD (191 aa)). The Nucleophile role is filled by Cys-332.

Belongs to the CobB/CbiA family. It depends on Mg(2+) as a cofactor.

It carries out the reaction cob(II)yrinate + 2 L-glutamine + 2 ATP + 2 H2O = cob(II)yrinate a,c diamide + 2 L-glutamate + 2 ADP + 2 phosphate + 2 H(+). The catalysed reaction is Ni-sirohydrochlorin + 2 L-glutamine + 2 ATP + 2 H2O = Ni-sirohydrochlorin a,c-diamide + 2 L-glutamate + 2 ADP + 2 phosphate + 2 H(+). Its pathway is cofactor biosynthesis; adenosylcobalamin biosynthesis; cob(II)yrinate a,c-diamide from sirohydrochlorin (anaerobic route): step 10/10. In terms of biological role, catalyzes the ATP-dependent amidation of the two carboxylate groups at positions a and c of cobyrinate, using either L-glutamine or ammonia as the nitrogen source. Involved in the biosynthesis of the unique nickel-containing tetrapyrrole coenzyme F430, the prosthetic group of methyl-coenzyme M reductase (MCR), which plays a key role in methanogenesis and anaerobic methane oxidation. Catalyzes the ATP-dependent amidation of the two carboxylate groups at positions a and c of Ni-sirohydrochlorin, using L-glutamine or ammonia as the nitrogen source. The sequence is that of Cobyrinate a,c-diamide synthase from Methanosphaera stadtmanae (strain ATCC 43021 / DSM 3091 / JCM 11832 / MCB-3).